A 127-amino-acid polypeptide reads, in one-letter code: Probable 4-amino-4-deoxy-L-arabinose-phosphoundecaprenol flippase subunit ArnF (127 aa).

The helical transmembrane segment at 1 to 21 (MMGYFWALMSVLLVSGAQLMM) threads the bilayer. Residues 22-48 (KWAMVSLPPVGQTDALMSAFMSVTPGA) are Periplasmic-facing. The chain crosses the membrane as a helical span at residues 49–69 (VALVIGLFAYVFSMGCWYMAL). At 70 to 77 (RRIALSKA) the chain is on the cytoplasmic side. Residues 78–98 (YPLLSLSYVLVWAAAIGLPWL) form a helical membrane-spanning segment. The Periplasmic segment spans residues 99-101 (HEP). The helical transmembrane segment at 102 to 122 (FSVGKLAGVSVIFVGLLLVCL) threads the bilayer. At 123-127 (PDKKS) the chain is on the cytoplasmic side.

The protein belongs to the ArnF family. Heterodimer of ArnE and ArnF.

It localises to the cell inner membrane. Its pathway is bacterial outer membrane biogenesis; lipopolysaccharide biosynthesis. Its function is as follows. Translocates 4-amino-4-deoxy-L-arabinose-phosphoundecaprenol (alpha-L-Ara4N-phosphoundecaprenol) from the cytoplasmic to the periplasmic side of the inner membrane. The sequence is that of Probable 4-amino-4-deoxy-L-arabinose-phosphoundecaprenol flippase subunit ArnF from Enterobacter sp. (strain 638).